A 787-amino-acid chain; its full sequence is Dolichyl-diphosphooligosaccharide--protein glycosyltransferase subunit STT3A (787 aa).

Residues 1–18 (MAEPESSTAAAGGSRLRN) are Cytoplasmic-facing. A helical membrane pass occupies residues 19–39 (ACGGVLCAFTLLLIGVLAFSI). Residues 40–125 (RLFSVIKYES…LSVETVCVFT (86 aa)) are Lumenal-facing. Positions 53 to 55 (EFD) match the DXD motif 1 motif. Aspartate 55 is a Mn(2+) binding site. Residues 126-144 (APIFSANASWATYLLTKEA) traverse the membrane as a helical segment. Residues 145-146 (KG) lie on the Cytoplasmic side of the membrane. A helical membrane pass occupies residues 147–164 (TGAGLMAAAILAMVPSYI). Residues 165 to 175 (SRSVAGSYDNE) lie on the Lumenal side of the membrane. Residues aspartate 173 and glutamate 175 each coordinate Mn(2+). A DXD motif 2 motif is present at residues 173 to 175 (DNE). The helical transmembrane segment at 176 to 195 (AVAIFALIFTFYLYVKTLNT) threads the bilayer. The Cytoplasmic portion of the chain corresponds to 196-197 (GS). Residues 198–212 (LFYATLNALSYFYMV) form a helical membrane-spanning segment. Over 213 to 217 (CSWGG) the chain is Lumenal. A helical transmembrane segment spans residues 218–234 (YTFIINLIPIHVLLCIV). The Cytoplasmic segment spans residues 235–239 (TGRYS). The chain crosses the membrane as a helical span at residues 240–265 (SRLYIAYAPLVILGTLLAALVPVVGF). Over 266–273 (NAVMTSEH) the chain is Lumenal. The chain crosses the membrane as a helical span at residues 274–293 (FASFLVFIILHVVALVYYIK). The Cytoplasmic segment spans residues 294 to 306 (GLLTPRLFKVAMT). Residues 307-327 (LVITVGLAVCFAVIAILIALV) form a helical membrane-spanning segment. The Lumenal portion of the chain corresponds to 328–365 (ASSPTKGWSGRSLSLLDPTYASKYIPIIASVSEHQPPT). An SVSE motif motif is present at residues 357–360 (SVSE). Residues 366–388 (WPSYFMDINVLAFLIPAGIISCF) traverse the membrane as a helical segment. Residues 389-394 (LPLSDA) lie on the Cytoplasmic side of the membrane. The helical transmembrane segment at 395–411 (SSFVVLYLVTAVYFSGV) threads the bilayer. The Lumenal segment spans residues 412-415 (MVRL). Arginine 414 is a dolichyl diphosphooligosaccharide binding site. The chain crosses the membrane as a helical span at residues 416–437 (MLVLAPAACILSGIALSEAFDV). The Cytoplasmic segment spans residues 438–525 (LTRSVKYQLS…KLLVLPMEAS (88 aa)). The segment covering 453–475 (SPAASGDSSAESSSASTVSTNSA) has biased composition (low complexity). The segment at 453 to 507 (SPAASGDSSAESSSASTVSTNSAKNETRPEKTETAPKEKPSKKNRKKEKEVAESV) is disordered. Positions 477–504 (NETRPEKTETAPKEKPSKKNRKKEKEVA) are enriched in basic and acidic residues. A helical membrane pass occupies residues 526–546 (VLGILLLIVLGGFYVVHCVWA). Topologically, residues 547-787 (AAEAYSAPSI…AAGRKKNPWQ (241 aa)) are lumenal. Residues 592–594 (WWD) form an interacts with target acceptor peptide in protein substrate region. The short motif at 592 to 596 (WWDYG) is the WWDYG motif element. Position 597 (tyrosine 597) interacts with dolichyl diphosphooligosaccharide. Asparagine 604 and asparagine 611 each carry an N-linked (GlcNAc...) asparagine glycan. N-linked (GlcNAc...) (high mannose) asparagine glycosylation is present at asparagine 615. The DK motif motif lies at 659–666 (DINKFLWM). Positions 759-769 (RVRGKLKKLKS) are enriched in basic residues. Residues 759-787 (RVRGKLKKLKSGSKASSTNAAGRKKNPWQ) are disordered.

This sequence belongs to the STT3 family. Component of the oligosaccharyltransferase (OST) complex. Requires Mg(2+) as cofactor. Mn(2+) is required as a cofactor.

Its subcellular location is the endoplasmic reticulum membrane. It carries out the reaction a di-trans,poly-cis-dolichyl diphosphooligosaccharide + L-asparaginyl-[protein] = N(4)-(oligosaccharide-(1-&gt;4)-N-acetyl-beta-D-glucosaminyl-(1-&gt;4)-N-acetyl-beta-D-glucosaminyl)-L-asparaginyl-[protein] + a di-trans,poly-cis-dolichyl diphosphate + H(+). It participates in protein modification; protein glycosylation. Catalytic subunit of the oligosaccharyl transferase (OST) complex that catalyzes the initial transfer of a defined glycan (Glc(3)Man(9)GlcNAc(2) in eukaryotes) from the lipid carrier dolichol-pyrophosphate to an asparagine residue within an Asn-X-Ser/Thr consensus motif in nascent polypeptide chains, the first step in protein N-glycosylation. N-glycosylation occurs cotranslationally and the complex associates with the Sec61 complex at the channel-forming translocon complex that mediates protein translocation across the endoplasmic reticulum (ER). All subunits are required for a maximal enzyme activity. This subunit contains the active site and the acceptor peptide and donor lipid-linked oligosaccharide (LLO) binding pockets. This is Dolichyl-diphosphooligosaccharide--protein glycosyltransferase subunit STT3A (STT3A) from Oryza sativa subsp. japonica (Rice).